The following is a 289-amino-acid chain: Acetyl-coenzyme A carboxylase carboxyl transferase subunit beta (289 aa).

The region spanning 30–289 (IWRECPRCHS…SNAWRANHDK (260 aa)) is the CoA carboxyltransferase N-terminal domain. Zn(2+)-binding residues include cysteine 34, cysteine 37, cysteine 52, and cysteine 55. The C4-type zinc finger occupies 34 to 55 (CPRCHSRFYYRRFGNFDVCPEC).

This sequence belongs to the AccD/PCCB family. In terms of assembly, acetyl-CoA carboxylase is a heterohexamer composed of biotin carboxyl carrier protein (AccB), biotin carboxylase (AccC) and two subunits each of ACCase subunit alpha (AccA) and ACCase subunit beta (AccD). Zn(2+) serves as cofactor.

The protein localises to the cytoplasm. It catalyses the reaction N(6)-carboxybiotinyl-L-lysyl-[protein] + acetyl-CoA = N(6)-biotinyl-L-lysyl-[protein] + malonyl-CoA. The protein operates within lipid metabolism; malonyl-CoA biosynthesis; malonyl-CoA from acetyl-CoA: step 1/1. Component of the acetyl coenzyme A carboxylase (ACC) complex. Biotin carboxylase (BC) catalyzes the carboxylation of biotin on its carrier protein (BCCP) and then the CO(2) group is transferred by the transcarboxylase to acetyl-CoA to form malonyl-CoA. In Oenococcus oeni (strain ATCC BAA-331 / PSU-1), this protein is Acetyl-coenzyme A carboxylase carboxyl transferase subunit beta.